The chain runs to 490 residues: MARFELQKLYIDGAYSDAGSDATFEAINPANGEVLAHVQRATKEDVERAVVSAEKGQKIWAAMTAMERSRILRRAVDILRERNDELAALETLDTGKAFSETKYVDIVTGADVLEYYAGLVPAIEGEQIPLRDTSFVYTRREPLGVVAGIGAWNYPIQIALWKSAPALAAGNAMIFKPSEVTSLTTLKLAEIYTEAGVPNGVFNVLTGSGREVGTWLTEHPRIEKISFTGGTDTGKKVMASASASSLKDVTMELGGKSPLIICDDADLDRAADTAMMANFYSSGQVCTNGTRVFVPSHLKAAFEAKIVERVARIRVGNPEDENTNFGPLVSFPHMESVLGYIAKGKEEGARVLCGGERLTDGEFAKGAFVAPTVFTDCTDDMTIVREEIFGPVMAILSYETEEEVIRRANDTDFGLAAGIVTRDLNRAHRVIHQLEAGICWINAWGESDAKMPVGGYKQSGVGRENGISSLNNFTRIKSVQVELGDYVSVF.

2 residues coordinate K(+): Ile27 and Asp93. Gly150–Trp152 provides a ligand contact to NAD(+). Lys162 (charge relay system) is an active-site residue. Lys176–Glu179 lines the NAD(+) pocket. Val180 is a K(+) binding site. Gly230 to Thr233 provides a ligand contact to NAD(+). Residue Leu246 coordinates K(+). The Proton acceptor role is filled by Glu252. Residues Gly254, Cys286, and Glu387 each coordinate NAD(+). Cys286 serves as the catalytic Nucleophile. Residue Cys286 is modified to Cysteine sulfenic acid (-SOH). K(+) is bound by residues Lys457 and Gly460. The active-site Charge relay system is Glu464.

The protein belongs to the aldehyde dehydrogenase family. In terms of assembly, dimer of dimers. Requires K(+) as cofactor.

It catalyses the reaction betaine aldehyde + NAD(+) + H2O = glycine betaine + NADH + 2 H(+). The protein operates within amine and polyamine biosynthesis; betaine biosynthesis via choline pathway; betaine from betaine aldehyde: step 1/1. Its function is as follows. Involved in the biosynthesis of the osmoprotectant glycine betaine. Catalyzes the irreversible oxidation of betaine aldehyde to the corresponding acid. The polypeptide is Betaine aldehyde dehydrogenase (Pseudomonas fluorescens (strain Pf0-1)).